The primary structure comprises 239 residues: Zinc finger protein 575 (239 aa).

The segment at 1-62 is disordered; that stretch reads MLGGSVKSEV…PQRPHRCPDC (62 aa). Basic and acidic residues predominate over residues 22–31; that stretch reads PETKAPHQDL. The segment covering 46 to 57 has biased composition (basic residues); it reads RPRRRPPPQRPH. 6 C2H2-type zinc fingers span residues 57–79, 85–107, 113–135, 141–163, 171–193, and 207–230; these read HRCP…RLAH, HPCP…RLTH, HSCP…LWTH, YPCP…RHTH, YPCP…RLCH, and HRCS…RSHH.

This sequence belongs to the krueppel C2H2-type zinc-finger protein family.

It is found in the nucleus. Its function is as follows. May be involved in transcriptional regulation. The sequence is that of Zinc finger protein 575 (Znf575) from Mus musculus (Mouse).